The chain runs to 592 residues: Inactive metallocarboxypeptidase ECM14 (592 aa).

Positions 1–21 (MRQFTHGTLLAILALANTISA) are cleaved as a signal peptide. The propeptide occupies 22 to 174 (IPSFSANNYP…QTVYESYPSS (153 aa)). A compositionally biased stretch (polar residues) spans 170-179 (SYPSSSQRPT). The segment at 170–191 (SYPSSSQRPTDNGRGFLPSRES) is disordered. Residues 202-521 (DYQPLSVIGP…NAVMVLGKFL (320 aa)) enclose the Peptidase M14 domain. 2 residues coordinate Zn(2+): H264 and E267. Residues 264–267 (HARE), R322, and 339–340 (DR) each bind substrate. A disulfide bond links C333 and C356. The N-linked (GlcNAc...) asparagine glycan is linked to N349. Position 396 (H396) interacts with Zn(2+). 397–398 (SY) is a substrate binding site. Positions 542 to 592 (ADKPILDDGDDDEEEDGQDKNDDSWIPDEYKNDNDHDDDDDGWGLRRRRKR) are disordered. The span at 548-558 (DDGDDDEEEDG) shows a compositional bias: acidic residues. The span at 559-575 (QDKNDDSWIPDEYKNDN) shows a compositional bias: basic and acidic residues.

The protein belongs to the peptidase M14 family. Zn(2+) is required as a cofactor.

Its subcellular location is the vacuole. The protein localises to the secreted. Inactive carboxypeptidase that may play a role in cell wall organization and biogenesis. The polypeptide is Inactive metallocarboxypeptidase ECM14 (ECM14) (Blastomyces gilchristii (strain SLH14081) (Blastomyces dermatitidis)).